The sequence spans 179 residues: Large ribosomal subunit protein uL5 (179 aa).

The protein belongs to the universal ribosomal protein uL5 family. In terms of assembly, part of the 50S ribosomal subunit; part of the 5S rRNA/L5/L18/L25 subcomplex. Contacts the 5S rRNA and the P site tRNA. Forms a bridge to the 30S subunit in the 70S ribosome.

Its function is as follows. This is one of the proteins that bind and probably mediate the attachment of the 5S RNA into the large ribosomal subunit, where it forms part of the central protuberance. In the 70S ribosome it contacts protein S13 of the 30S subunit (bridge B1b), connecting the 2 subunits; this bridge is implicated in subunit movement. Contacts the P site tRNA; the 5S rRNA and some of its associated proteins might help stabilize positioning of ribosome-bound tRNAs. In Bacillus mycoides (strain KBAB4) (Bacillus weihenstephanensis), this protein is Large ribosomal subunit protein uL5.